Here is a 1056-residue protein sequence, read N- to C-terminus: E3 SUMO-protein ligase ZNF451 (1056 aa).

Residues 1–39 (MGDPGPEIIESVPPAGPEASESTTDENEDDIQFVSEGPL) form a disordered region. A sufficient for E3 SUMO-protein ligase activity region spans residues 1–246 (MGDPGPEIIE…AADGHSNSLL (246 aa)). The interval 1–344 (MGDPGPEIIE…RVRCQNAGPV (344 aa)) is important for interaction with SUMO1 and SUMO2. Residues 30 to 37 (DIQFVSEG) form an interaction with SUMO2 1 region. Positions 38 to 41 (PLRP) match the PLRP motif. The segment at 42-50 (VLEYIDLVS) is interaction with SUMO2 2. Glycyl lysine isopeptide (Lys-Gly) (interchain with G-Cter in SUMO2) cross-links involve residues K75, K77, K106, K139, and K153. Phosphoserine is present on S155. R158 is modified (omega-N-methylarginine). Residue K167 forms a Glycyl lysine isopeptide (Lys-Gly) (interchain with G-Cter in SUMO2) linkage. Residues 168–521 (PILCPIMHCN…HMSRFHGGAH (354 aa)) form an important for interaction with SMAD4 region. The C2H2-type 1 zinc finger occupies 169–195 (ILCPIMHCNKEFDNGHLLLGHLKRFDH). The segment at 212–234 (FACAVCYEHFVTQQQYKDHLLSR) adopts a C2H2-type 2; degenerate zinc-finger fold. The segment at 253–277 (YACPQCFLLFSTKDECLKHMSTKNH) adopts a C2H2-type 3 zinc-finger fold. Residues K270, K275, K283, K288, K301, and K309 each participate in a glycyl lysine isopeptide (Lys-Gly) (interchain with G-Cter in SUMO2) cross-link. The segment at 315 to 338 (VKCVACHQTLRSHMELTAHFRVRC) adopts a C2H2-type 4; atypical zinc-finger fold. The C2H2-type 5 zinc finger occupies 362–385 (GYCSDCNQVFMDVASTQSHKNSGH). K420 participates in a covalent cross-link: Glycyl lysine isopeptide (Lys-Gly) (interchain with G-Cter in SUMO2). S429 carries the phosphoserine modification. Residue K431 forms a Glycyl lysine isopeptide (Lys-Gly) (interchain with G-Cter in SUMO2) linkage. 2 C2H2-type zinc fingers span residues 494–517 (YKCV…SRFH) and 527–550 (FWCR…TEFH). Residues K539 and K583 each participate in a glycyl lysine isopeptide (Lys-Gly) (interchain with G-Cter in SUMO2) cross-link. Residues 604-629 (WQCRICEDMFESQECVKQHCMSLTSH) form a C2H2-type 8; atypical zinc finger. 2 consecutive C2H2-type zinc fingers follow at residues 634–657 (YSCA…QDEH) and 665–688 (YFCG…KEHH). K645 participates in a covalent cross-link: Glycyl lysine isopeptide (Lys-Gly) (interchain with G-Cter in SUMO2). K704 is covalently cross-linked (Glycyl lysine isopeptide (Lys-Gly) (interchain with G-Cter in SUMO1); alternate). Residue K704 forms a Glycyl lysine isopeptide (Lys-Gly) (interchain with G-Cter in SUMO2); alternate linkage. Glycyl lysine isopeptide (Lys-Gly) (interchain with G-Cter in SUMO2) cross-links involve residues K729 and K746. 2 C2H2-type zinc fingers span residues 751–774 (FRCS…CQVH) and 787–810 (IKCG…HRKH). Glycyl lysine isopeptide (Lys-Gly) (interchain with G-Cter in SUMO2) cross-links involve residues K788, K815, K843, K849, K947, K988, and K989. Disordered regions lie at residues 806–830 (FHRK…STCQ) and 839–858 (EKNL…KGAE). A compositionally biased stretch (basic and acidic residues) spans 849 to 858 (KHSDVEKGAE). A disordered region spans residues 1019–1045 (KECDSDDSSGMKGSPAEELRATEDVEL). Over residues 1033-1045 (PAEELRATEDVEL) the composition is skewed to basic and acidic residues. The segment at 1045-1056 (LEEAIRRSLEEM) is important for ubiquitin binding.

The protein belongs to the krueppel C2H2-type zinc-finger protein family. Homooligomer. Interacts (via N-terminal region) with SUMO1. Interacts (via N-terminal region) with SUMO2. Interacts simultaneously with two SUMO2 chains. Identified in a complex with SUMO2 and UBE2I/UBC9, where one ZNF451 interacts with one UBE2I/UBC9 and two SUMO2 chains, one bound to the UBE2I/UBC9 active site and the other to another region of the same UBE2I/UBC9 molecule. Interacts (via C-terminus) with ubiquitin. Interacts (via N-terminal zinc-finger domains) with SMAD4 (via MH2 domain). Interacts with SMAD2 and SMAD3. Identified in a complex that contains at least ZNF451, SMAD2, SMAD3 and SMAD4. Interacts with EP300. Inhibits interaction between EP300 and the SMAD4 complex. Interacts with SIMC1. Sumoylated. Predominantly sumoylated on the N-terminal region that is important for interaction with SUMO1 and SUMO2. Sumoylation is important for localization in nuclear granules; desumoylation leads to diffuse nucleoplasmic location. Autosumoylated (in vitro). Sumoylation enhances E3 SUMO-protein ligase activity.

The protein localises to the nucleus. It localises to the PML body. It is found in the nucleoplasm. It participates in protein modification; protein sumoylation. In terms of biological role, E3 SUMO-protein ligase; has a preference for SUMO2 and SUMO3 and facilitates UBE2I/UBC9-mediated sumoylation of target proteins. Plays a role in protein SUMO2 modification in response to stress caused by DNA damage and by proteasome inhibitors (in vitro). Required for MCM4 sumoylation. Has no activity with SUMO1. Preferentially transfers an additional SUMO2 chain onto the SUMO2 consensus site 'Lys-11'. Negatively regulates transcriptional activation mediated by the SMAD4 complex in response to TGF-beta signaling. Inhibits EP300-mediated acetylation of histone H3 at 'Lys-9'. Plays a role in regulating the transcription of AR targets. This is E3 SUMO-protein ligase ZNF451 (Znf451) from Mus musculus (Mouse).